Here is a 215-residue protein sequence, read N- to C-terminus: Nuclear autoantigen Sp-100 (215 aa).

The region spanning 1–31 is the SAND domain; it reads EGDRGASKNWKLSIRCGGYTLKVLTENKFLP. DNA-binding regions (HMG box) lie at residues 32–108 and 124–192; these read EPPS…KTYI and PKRP…AACR. Residues 72–89 carry the Nuclear localization signal motif; that stretch reads KKRSEMWKTIFAKEKGKF. Disordered stretches follow at residues 104-124 and 193-215; these read MKTY…PNAP and AKGK…KKKE.

Homodimer. Interacts with members of the HP1 family of nonhistone chromosomal protein, such as CBX5 and CBX3 via the PxVxL motif. Interacts with ETS1; the interaction is direct and modulates ETS1 transcriptional activity. Interacts with the MRN complex which is composed of two heterodimers RAD50/MRE11 associated with a single NBN; recruits the complex to PML-related bodies. Interacts with HIPK2; positively regulates TP53-dependent transcription. Interacts with CASP8AP2; may negatively regulate CASP8AP2 export from the nucleus to the cytoplasm. Phosphorylated. Post-translationally, sumoylated. Sumoylated with SUMO1. Sumoylation depends on a functional nuclear localization signal but is not necessary for nuclear import or nuclear body targeting. Sumoylation may stabilize the interaction with CBX5.

The protein localises to the nucleus. It localises to the PML body. The protein resides in the nuclear body. Its subcellular location is the cytoplasm. Together with PML, this tumor suppressor is a major constituent of the PML bodies, a subnuclear organelle involved in a large number of physiological processes including cell growth, differentiation and apoptosis. Functions as a transcriptional coactivator of ETS1 and ETS2. Under certain conditions, it may also act as a corepressor of ETS1 preventing its binding to DNA. Through the regulation of ETS1 it may play a role in angiogenesis, controlling endothelial cell motility and invasion. Through interaction with the MRN complex it may be involved in the regulation of telomeres lengthening. May also regulate TP53-mediated transcription and through CASP8AP2, regulate FAS-mediated apoptosis. May also play a role in infection by viruses through mechanisms that may involve chromatin and/or transcriptional regulation. This is Nuclear autoantigen Sp-100 (SP100) from Pan troglodytes (Chimpanzee).